A 634-amino-acid polypeptide reads, in one-letter code: Nitrous-oxide reductase (634 aa).

The segment at residues 1–49 (MSDKQTDKDEKTGLSRRGFLGASALTRSAVAASGLVGGVMTRDSWAAAA) is a signal peptide (tat-type signal). Cu cation-binding residues include His-125, His-126, and His-174. Tyr-252, Glu-255, Met-263, Asp-269, and Asn-320 together coordinate Ca(2+). Residues His-322, His-378, and His-429 each coordinate Cu cation. Lys-450 and Glu-465 together coordinate Ca(2+). 7 residues coordinate Cu cation: His-490, His-579, Cys-614, Trp-616, Cys-618, His-622, and Met-625. The COX2-like stretch occupies residues 538-634 (NKVRVYMTSM…MVGRMMVEPA (97 aa)).

It belongs to the NosZ family. The protein in the C-terminal section; belongs to the cytochrome c oxidase subunit 2 family. Homodimer. The cofactor is Ca(2+). Requires Cu cation as cofactor. Predicted to be exported by the Tat system. The position of the signal peptide cleavage has not been experimentally proven.

It is found in the periplasm. It catalyses the reaction N2 + 2 Fe(III)-[cytochrome c] + H2O = nitrous oxide + 2 Fe(II)-[cytochrome c] + 2 H(+). The protein operates within nitrogen metabolism; nitrate reduction (denitrification); dinitrogen from nitrate: step 4/4. Functionally, nitrous-oxide reductase is part of a bacterial respiratory system which is activated under anaerobic conditions in the presence of nitrate or nitrous oxide. In Pseudomonas aeruginosa, this protein is Nitrous-oxide reductase (nosZ).